A 954-amino-acid polypeptide reads, in one-letter code: Isoleucine--tRNA ligase (954 aa).

The 'HIGH' region motif lies at 58–68 (PYANGDIHIGH). Glutamate 572 is a binding site for L-isoleucyl-5'-AMP. The short motif at 613 to 617 (KMSKS) is the 'KMSKS' region element. Position 616 (lysine 616) interacts with ATP. Cysteine 917, cysteine 920, cysteine 937, and cysteine 940 together coordinate Zn(2+).

This sequence belongs to the class-I aminoacyl-tRNA synthetase family. IleS type 1 subfamily. Monomer. Zn(2+) is required as a cofactor.

It is found in the cytoplasm. The enzyme catalyses tRNA(Ile) + L-isoleucine + ATP = L-isoleucyl-tRNA(Ile) + AMP + diphosphate. In terms of biological role, catalyzes the attachment of isoleucine to tRNA(Ile). As IleRS can inadvertently accommodate and process structurally similar amino acids such as valine, to avoid such errors it has two additional distinct tRNA(Ile)-dependent editing activities. One activity is designated as 'pretransfer' editing and involves the hydrolysis of activated Val-AMP. The other activity is designated 'posttransfer' editing and involves deacylation of mischarged Val-tRNA(Ile). The polypeptide is Isoleucine--tRNA ligase (Photobacterium profundum (strain SS9)).